The chain runs to 152 residues: Ribosome maturation factor RimP (152 aa).

It belongs to the RimP family.

Its subcellular location is the cytoplasm. Required for maturation of 30S ribosomal subunits. The protein is Ribosome maturation factor RimP of Escherichia coli (strain K12 / MC4100 / BW2952).